A 353-amino-acid chain; its full sequence is Glutamate 5-kinase (353 aa).

K8 is an ATP binding site. Substrate is bound by residues S47, D134, and N146. Position 198–204 (198–204) interacts with ATP; the sequence is TGGIRSK. Residues 262-339 enclose the PUA domain; it reads AGKIYVNKGA…SDLKKILGYE (78 aa).

This sequence belongs to the glutamate 5-kinase family.

Its subcellular location is the cytoplasm. It catalyses the reaction L-glutamate + ATP = L-glutamyl 5-phosphate + ADP. It functions in the pathway amino-acid biosynthesis; L-proline biosynthesis; L-glutamate 5-semialdehyde from L-glutamate: step 1/2. Its function is as follows. Catalyzes the transfer of a phosphate group to glutamate to form L-glutamate 5-phosphate. The chain is Glutamate 5-kinase from Thermotoga maritima (strain ATCC 43589 / DSM 3109 / JCM 10099 / NBRC 100826 / MSB8).